The following is a 575-amino-acid chain: MLSTNKNRLIEMLSAALTGLAQERGLEAPPTPRLERPKAVDHGDVACNIALQLSKAWKLNPRELAQALVERLQQQTGFNELIASCEIAGPGFSNFRLSNAAKTAVVQEILSGGTSFGESAPADGSATSAMIEFVSANPTGPLHVGHGRQAALGDALANLLATQGIKVHREFYYNDAGVQIANLALSVQARLQGLKPGDAKWPEQAYNGEYIAEIATTFKASPEFKDDIEAIRQFAVAYLRNEQDIDLKTFGVKFDCYYLESSLYTDGSVAQIVGDLQSIGKTYESEGVLWLKTIDDGDDKDRVMRKSDGSFTYFVPDVAYHTSKWNRGFQKVINVQGSDHHGTIARVRSGLQGVAQKRGWDIPKTYPDYVLHKMVTVMRHGEEVKISKRAGSYVTVRDLVEWSGGVTPEMTSEERELALQRGRDAVRFFLISRKADTEFVFDIDLALQQNDENPVFYVQYAHARISSILQQWGGQTSDLASADLSLLQSKASDHLLRCLAEYPEMLTTAAEELAPHALAFYLRNLAGDFHTFYNADRVLVDDQNLKLARLALLSATRQVLQNGLKVLGVSAPAKM.

The short motif at Ala-136 to His-146 is the 'HIGH' region element.

The protein belongs to the class-I aminoacyl-tRNA synthetase family. In terms of assembly, monomer.

The protein resides in the cytoplasm. The catalysed reaction is tRNA(Arg) + L-arginine + ATP = L-arginyl-tRNA(Arg) + AMP + diphosphate. The protein is Arginine--tRNA ligase of Polynucleobacter necessarius subsp. necessarius (strain STIR1).